A 224-amino-acid polypeptide reads, in one-letter code: Ribulose-phosphate 3-epimerase (224 aa).

Position 8 (Ser-8) interacts with substrate. A divalent metal cation is bound by residues His-31, Asp-33, and His-64. The Proton acceptor role is filled by Asp-33. Residues His-64, 140–143 (GFGG), 173–175 (DGG), and 195–196 (GS) contribute to the substrate site. Asp-173 contributes to the a divalent metal cation binding site. Asp-173 serves as the catalytic Proton donor.

It belongs to the ribulose-phosphate 3-epimerase family. A divalent metal cation is required as a cofactor.

The catalysed reaction is D-ribulose 5-phosphate = D-xylulose 5-phosphate. It functions in the pathway carbohydrate degradation. Its function is as follows. Catalyzes the reversible epimerization of D-ribulose 5-phosphate to D-xylulose 5-phosphate. This is Ribulose-phosphate 3-epimerase from Mycobacterium leprae (strain TN).